A 245-amino-acid chain; its full sequence is 7-cyano-7-deazaguanine synthase (245 aa).

Residue 19 to 29 coordinates ATP; sequence FSGGQDSATCL. 4 residues coordinate Zn(2+): Cys207, Cys222, Cys225, and Cys228.

Belongs to the QueC family. It depends on Zn(2+) as a cofactor.

It catalyses the reaction 7-carboxy-7-deazaguanine + NH4(+) + ATP = 7-cyano-7-deazaguanine + ADP + phosphate + H2O + H(+). The protein operates within purine metabolism; 7-cyano-7-deazaguanine biosynthesis. Its function is as follows. Catalyzes the ATP-dependent conversion of 7-carboxy-7-deazaguanine (CDG) to 7-cyano-7-deazaguanine (preQ(0)). The chain is 7-cyano-7-deazaguanine synthase from Gluconacetobacter diazotrophicus (strain ATCC 49037 / DSM 5601 / CCUG 37298 / CIP 103539 / LMG 7603 / PAl5).